Consider the following 62-residue polypeptide: Large ribosomal subunit protein bL33 (62 aa).

It belongs to the bacterial ribosomal protein bL33 family.

In Cyanothece sp. (strain PCC 7425 / ATCC 29141), this protein is Large ribosomal subunit protein bL33.